We begin with the raw amino-acid sequence, 389 residues long: Succinate--CoA ligase [ADP-forming] subunit beta (389 aa).

In terms of domain architecture, ATP-grasp spans 9 to 236 (RDMFEAHGVP…KDAADPLEAK (228 aa)). ATP contacts are provided by residues Lys45, 52 to 54 (GRG), Ala94, and Glu99. Mg(2+) is bound by residues Asn191 and Asp205. Residues Asn256 and 318–320 (GIT) each bind substrate.

Belongs to the succinate/malate CoA ligase beta subunit family. Heterotetramer of two alpha and two beta subunits. It depends on Mg(2+) as a cofactor.

The catalysed reaction is succinate + ATP + CoA = succinyl-CoA + ADP + phosphate. The enzyme catalyses GTP + succinate + CoA = succinyl-CoA + GDP + phosphate. It participates in carbohydrate metabolism; tricarboxylic acid cycle; succinate from succinyl-CoA (ligase route): step 1/1. Succinyl-CoA synthetase functions in the citric acid cycle (TCA), coupling the hydrolysis of succinyl-CoA to the synthesis of either ATP or GTP and thus represents the only step of substrate-level phosphorylation in the TCA. The beta subunit provides nucleotide specificity of the enzyme and binds the substrate succinate, while the binding sites for coenzyme A and phosphate are found in the alpha subunit. In Paenarthrobacter aurescens (strain TC1), this protein is Succinate--CoA ligase [ADP-forming] subunit beta.